Reading from the N-terminus, the 438-residue chain is Aspartate--tRNA(Asp/Asn) ligase (438 aa).

E176 is a binding site for L-aspartate. The segment at Q198 to K201 is aspartate. Position 220 (R220) interacts with L-aspartate. ATP contacts are provided by residues R220 to E222, R228 to L230, and E361. Mg(2+)-binding residues include E361 and S364. The L-aspartate site is built by S364 and R368. G409–R412 is an ATP binding site.

The protein belongs to the class-II aminoacyl-tRNA synthetase family. Type 2 subfamily. Homodimer. Mg(2+) is required as a cofactor.

The protein resides in the cytoplasm. The enzyme catalyses tRNA(Asx) + L-aspartate + ATP = L-aspartyl-tRNA(Asx) + AMP + diphosphate. Its function is as follows. Aspartyl-tRNA synthetase with relaxed tRNA specificity since it is able to aspartylate not only its cognate tRNA(Asp) but also tRNA(Asn). Reaction proceeds in two steps: L-aspartate is first activated by ATP to form Asp-AMP and then transferred to the acceptor end of tRNA(Asp/Asn). In Methanococcus aeolicus (strain ATCC BAA-1280 / DSM 17508 / OCM 812 / Nankai-3), this protein is Aspartate--tRNA(Asp/Asn) ligase.